Reading from the N-terminus, the 171-residue chain is Minor capsid protein 3 (171 aa).

In terms of assembly, interacts with the major capsid protein.

The protein localises to the virion. Its function is as follows. One of the minor capsid proteins that constitute a network internal to the major capsid proteins and outside the lipid membrane. The minor capsid proteins glue and stabilize the capsomers. In Chlorella (PBCV-1), this protein is Minor capsid protein 3.